A 78-amino-acid polypeptide reads, in one-letter code: UPF0291 protein LBUL_1264 (78 aa).

This sequence belongs to the UPF0291 family.

The protein localises to the cytoplasm. This Lactobacillus delbrueckii subsp. bulgaricus (strain ATCC BAA-365 / Lb-18) protein is UPF0291 protein LBUL_1264.